A 289-amino-acid chain; its full sequence is E3 ubiquitin-protein ligase MARCHF1 (289 aa).

Positions 1–66 (MLGWCEAIAR…SPTTGTAPRS (66 aa)) are responsible for low stability. The segment at 13–69 (HRIPNNTRTPEISGDLADASQTSTLNEKSPGRSASRSSNISKASSPTTGTAPRSQSR) is disordered. Residues 43-58 (GRSASRSSNISKASSP) show a composition bias toward low complexity. Positions 59 to 69 (TTGTAPRSQSR) are enriched in polar residues. An RING-CH-type zinc finger spans residues 72–133 (VCPSTQDICR…ELCKYDFIME (62 aa)). 8 residues coordinate Zn(2+): C80, C83, C97, C99, H107, C110, C123, and C126. Helical transmembrane passes span 155 to 175 (IFCS…SLYV) and 197 to 217 (FWTK…FMYV). Residues 222–279 (YVQLWRRLKAYNRVIFVQNCPDTAKKLEKNFSCNVNTDIKDAVVVPVPQTGANSLPSA) are responsible for down-regulation of CD86 and MHC class II cell surface expression.

Interacts with CD83; this interaction antagonizes MARCHF1-mediated MHC II and CD86 down-regulation. Ubiquitinated via ubiquitin-conjugating enzyme E2 D1/UBE2D1 independently of lysines, leading to proteolytic degradation. In terms of processing, has a short half-life. Instability/short half-life permits rapid changes that allow efficient induction of antigen presentation once antigen presenting cells, APCs, receive maturation signals. Small changes in protein levels significantly alter the cell surface display of MHC class II proteins. Expressed in antigen presenting cells, APCs, located in lymph nodes and spleen. Also expressed in lung. Expression is high in follicular B-cells, moderate in dendritic cells and low in splenic T-cells.

The protein localises to the golgi apparatus. It is found in the trans-Golgi network membrane. The protein resides in the lysosome membrane. It localises to the cytoplasmic vesicle membrane. Its subcellular location is the late endosome membrane. The protein localises to the early endosome membrane. It is found in the cell membrane. It carries out the reaction S-ubiquitinyl-[E2 ubiquitin-conjugating enzyme]-L-cysteine + [acceptor protein]-L-lysine = [E2 ubiquitin-conjugating enzyme]-L-cysteine + N(6)-ubiquitinyl-[acceptor protein]-L-lysine.. It participates in protein modification; protein ubiquitination. Functionally, E3 ubiquitin-protein ligase that mediates ubiquitination of TFRC, CD86, FAS and MHC class II proteins, such as HLA-DR alpha and beta, and promotes their subsequent endocytosis and sorting to lysosomes via multivesicular bodies. By constitutively ubiquitinating MHC class II proteins in immature dendritic cells, down-regulates their cell surface localization thus sequestering them in the intracellular endosomal system. Also regulates insulin sensitivity by controlling surface expression of the insulin receptor subunit beta/INSR by direct ubiquitination and degradation. Its function is as follows. (Microbial infection) Plays a role in iron metabolism by regulating the levels of the transferrin receptor TFRC during human cytomegalovirus infection, subsequently contributing to a proviral effect. This chain is E3 ubiquitin-protein ligase MARCHF1, found in Homo sapiens (Human).